The chain runs to 403 residues: Accessory Sec system protein translocase subunit SecY2 (403 aa).

10 helical membrane-spanning segments follow: residues 17–37 (MLYT…SIVS), 63–83 (LNIF…LMLI), 105–125 (ILTL…YVSK), 131–151 (DNIY…VWLA), 157–177 (YGIA…MMHQ), 186–206 (HIVI…LLFI), 240–260 (ITLM…HFIL), 276–296 (FDSP…GYFL), 339–359 (WFGL…TLFV), and 366–386 (IYFS…AETI).

The protein belongs to the SecY/SEC61-alpha family. SecY2 subfamily. In terms of assembly, may form heterotrimers with SecE and SecG subunits (Potential). Component of the accessory SecA2/SecY2 protein translocase complex required to export cell wall protein SrpA.

The protein resides in the cell membrane. Its function is as follows. The central subunit of a protein translocation channel (Potential). Part of the accessory SecA2/SecY2 system specifically required to export SraP, a serine-rich repeat cell wall protein encoded upstream in the same operon. The chain is Accessory Sec system protein translocase subunit SecY2 from Staphylococcus aureus (strain NCTC 8325 / PS 47).